The primary structure comprises 399 residues: Elongation factor Tu (399 aa).

In terms of domain architecture, tr-type G spans 10–204 (KPHVNIGTIG…AVDSSIPEPE (195 aa)). The interval 19–26 (GHVDHGKT) is G1. Residue 19 to 26 (GHVDHGKT) coordinates GTP. Threonine 26 contacts Mg(2+). The tract at residues 60–64 (GITIN) is G2. Positions 81 to 84 (DCPG) are G3. GTP-binding positions include 81–85 (DCPGH) and 136–139 (NKCD). A G4 region spans residues 136 to 139 (NKCD). A G5 region spans residues 174–176 (SGL).

This sequence belongs to the TRAFAC class translation factor GTPase superfamily. Classic translation factor GTPase family. EF-Tu/EF-1A subfamily. Monomer.

It localises to the cytoplasm. It catalyses the reaction GTP + H2O = GDP + phosphate + H(+). In terms of biological role, GTP hydrolase that promotes the GTP-dependent binding of aminoacyl-tRNA to the A-site of ribosomes during protein biosynthesis. In Synechococcus sp. (strain CC9605), this protein is Elongation factor Tu.